Consider the following 429-residue polypeptide: Histidine--tRNA ligase (429 aa).

This sequence belongs to the class-II aminoacyl-tRNA synthetase family. Homodimer.

It is found in the cytoplasm. The catalysed reaction is tRNA(His) + L-histidine + ATP = L-histidyl-tRNA(His) + AMP + diphosphate + H(+). The polypeptide is Histidine--tRNA ligase (Streptococcus pneumoniae serotype 2 (strain D39 / NCTC 7466)).